Reading from the N-terminus, the 231-residue chain is Large ribosomal subunit protein uL1 (231 aa).

Belongs to the universal ribosomal protein uL1 family. As to quaternary structure, part of the 50S ribosomal subunit.

In terms of biological role, binds directly to 23S rRNA. The L1 stalk is quite mobile in the ribosome, and is involved in E site tRNA release. Functionally, protein L1 is also a translational repressor protein, it controls the translation of the L11 operon by binding to its mRNA. The chain is Large ribosomal subunit protein uL1 from Pseudomonas savastanoi pv. phaseolicola (strain 1448A / Race 6) (Pseudomonas syringae pv. phaseolicola (strain 1448A / Race 6)).